Reading from the N-terminus, the 224-residue chain is Cytidylate kinase (224 aa).

11–19 is a binding site for ATP; the sequence is GPAGAGKST.

The protein belongs to the cytidylate kinase family. Type 1 subfamily.

It is found in the cytoplasm. The enzyme catalyses CMP + ATP = CDP + ADP. It carries out the reaction dCMP + ATP = dCDP + ADP. This Exiguobacterium sp. (strain ATCC BAA-1283 / AT1b) protein is Cytidylate kinase.